Consider the following 466-residue polypeptide: MLGTVKMEGHESNDWNSYYADTQEAYSSVPVSNMNSGLGSMNSMNTYMTMNTMTTSGNMTPASFNMSYANPGLGAGLSPGAVAGMPGGSAGAMNSMTAAGVTAMGAALSPGGMGSMGAQPAASMNGLGPYAAAMNPCMSPMAYAPSNLGRSRAGGGGDAKTFKRSYPHAKPPYSYISLITMAIQQAPSKMLTLSEIYQWIMDLFPYYRQNQQRWQNSIRHSLSFNACFVKVARSPDKPGKGSYWTLHPDSGNMFENGCYLRRQKRFKCEKQPGAGGGSGGGGSKGVPENRKDPSGPVNPSAESPIHRGVHGKASQLEGAPAPGPAASPQTLDHSGATATGGGSELKSPASSSAPPISSGPGGWICTPLSPTWLAPHESQLHLKGAPHYSFNHPFSINNLMSSSEQQHKLDFKAYEQALQYSPYGATLPASLPLGGASVATRSPIEPSALEPAYYQGVYSRPVLNTS.

Residues 169–260 (AKPPYSYISL…GNMFENGCYL (92 aa)) constitute a DNA-binding region (fork-head). Residues 251–288 (GNMFENGCYLRRQKRFKCEKQPGAGGGSGGGGSKGVPE) are essential for DNA binding. The disordered stretch occupies residues 269–358 (EKQPGAGGGS…ASSSAPPISS (90 aa)). Residues 273–284 (GAGGGSGGGGSK) show a composition bias toward gly residues. Phosphoserine is present on residues S303 and S327. Composition is skewed to low complexity over residues 318–328 (GAPAPGPAASP) and 344–358 (ELKS…PISS).

As to quaternary structure, binds DNA as a monomer. Interacts with FOXA2. Interacts with NKX2-1. Interacts with HDAC7. Interacts with the histone H3-H4 heterodimer. Associates with nucleosomes containing histone H2A. Interacts with AR. Interacts with NR0B2. Liver.

It is found in the nucleus. In terms of biological role, transcription factor that is involved in embryonic development, establishment of tissue-specific gene expression and regulation of gene expression in differentiated tissues. Is thought to act as a 'pioneer' factor opening the compacted chromatin for other proteins through interactions with nucleosomal core histones and thereby replacing linker histones at target enhancer and/or promoter sites. Binds DNA with the consensus sequence 5'-[AC]A[AT]T[AG]TT[GT][AG][CT]T[CT]-3'. Proposed to play a role in translating the epigenetic signatures into cell type-specific enhancer-driven transcriptional programs. Involved in glucose homeostasis; activates the GCG promoter. Involved in the development of multiple endoderm-derived organ systems such as the liver, pancreas, lungs and prostate; FOXA1 and FOXA2 seem to have at least in part redundant roles. Modulates the transcriptional activity of nuclear hormone receptors. Is required for maximal gene activation mediated by AR in the prostate. Negatively regulates AR transactivation via competition with coactivators such as NCOA2. Is involved in ESR1-mediated transcription. Involved in regulation of apoptosis. Involved in cell cycle regulation. Originally described as a transcription activator for a number of liver genes such as AFP, albumin, tyrosine aminotransferase, PEPCK, etc. Interacts with the cis-acting regulatory regions of these genes. This is Hepatocyte nuclear factor 3-alpha (Foxa1) from Rattus norvegicus (Rat).